A 600-amino-acid chain; its full sequence is uncharacterized protein (600 aa).

2 4Fe-4S ferredoxin-type domains span residues 14 to 44 and 53 to 82; these read RLAI…MGEK and GKPV…IIGL. ABC transporter domains follow at residues 77–318 and 348–563; these read ISII…YLYG and LLSY…LKEM. ATP contacts are provided by residues 117-124 and 380-387; these read GQNGIGKS and GPNGIGKT. A compositionally biased stretch (basic and acidic residues) spans 569–594; it reads RDPETGRPRANKEGSQRDIMQKEKGE. Residues 569 to 600 form a disordered region; that stretch reads RDPETGRPRANKEGSQRDIMQKEKGEYYYVDE.

This sequence belongs to the ABC transporter superfamily.

This is an uncharacterized protein from Methanocaldococcus jannaschii (strain ATCC 43067 / DSM 2661 / JAL-1 / JCM 10045 / NBRC 100440) (Methanococcus jannaschii).